Reading from the N-terminus, the 193-residue chain is Corrinoid adenosyltransferase (193 aa).

ATP-binding positions include T5–T13, K22, R130–R135, and N154.

It belongs to the Cob(I)alamin adenosyltransferase family. In terms of assembly, homotrimer.

It localises to the cytoplasm. It carries out the reaction 2 cob(II)yrinate a,c diamide + reduced [electron-transfer flavoprotein] + 2 ATP = 2 adenosylcob(III)yrinate a,c-diamide + 2 triphosphate + oxidized [electron-transfer flavoprotein] + 3 H(+). The enzyme catalyses 2 cob(II)alamin + reduced [electron-transfer flavoprotein] + 2 ATP = 2 adenosylcob(III)alamin + 2 triphosphate + oxidized [electron-transfer flavoprotein] + 3 H(+). It functions in the pathway cofactor biosynthesis; adenosylcobalamin biosynthesis; adenosylcobalamin from cob(II)yrinate a,c-diamide: step 2/7. The sequence is that of Corrinoid adenosyltransferase (yvqK) from Bacillus subtilis (strain 168).